The sequence spans 108 residues: MARNIGLDVPIPETECEDVNCPFHGTLPVRGQVITGKVVSDRMNGTVVVEREFLHYVKKYKRYEKRRSRYHAHSTPCINAGVGDVVRIAECRPLSKTTNFVVVEVMTE.

This sequence belongs to the universal ribosomal protein uS17 family. As to quaternary structure, part of the 30S ribosomal subunit.

In terms of biological role, one of the primary rRNA binding proteins, it binds specifically to the 5'-end of 16S ribosomal RNA. This chain is Small ribosomal subunit protein uS17, found in Methanoculleus marisnigri (strain ATCC 35101 / DSM 1498 / JR1).